Here is a 62-residue protein sequence, read N- to C-terminus: Photosystem II reaction center protein Z (62 aa).

A run of 2 helical transmembrane segments spans residues 8 to 28 and 41 to 61; these read TMFA…ITFA and FSGV…NSFI.

This sequence belongs to the PsbZ family. In terms of assembly, PSII is composed of 1 copy each of membrane proteins PsbA, PsbB, PsbC, PsbD, PsbE, PsbF, PsbH, PsbI, PsbJ, PsbK, PsbL, PsbM, PsbT, PsbY, PsbZ, Psb30/Ycf12, at least 3 peripheral proteins of the oxygen-evolving complex and a large number of cofactors. It forms dimeric complexes.

It localises to the plastid. The protein resides in the chloroplast thylakoid membrane. May control the interaction of photosystem II (PSII) cores with the light-harvesting antenna, regulates electron flow through the 2 photosystem reaction centers. PSII is a light-driven water plastoquinone oxidoreductase, using light energy to abstract electrons from H(2)O, generating a proton gradient subsequently used for ATP formation. The polypeptide is Photosystem II reaction center protein Z (Welwitschia mirabilis (Tree tumbo)).